Consider the following 190-residue polypeptide: N-alpha-acetyltransferase MAK3 (190 aa).

Positions isoleucine 16–proline 164 constitute an N-acetyltransferase domain.

It belongs to the acetyltransferase family. MAK3 subfamily. As to expression, expressed in roots, leaves, flowers and siliques.

It is found in the cytoplasm. The catalysed reaction is N-terminal L-methionyl-L-leucyl-[protein] + acetyl-CoA = N-terminal N(alpha)-acetyl-L-methionyl-L-leucyl-[protein] + CoA + H(+). It catalyses the reaction N-terminal L-methionyl-L-isoleucyl-[protein] + acetyl-CoA = N-terminal N(alpha)-acetyl-L-methionyl-L-isoleucyl-[protein] + CoA + H(+). It carries out the reaction N-terminal L-methionyl-L-phenylalanyl-[protein] + acetyl-CoA = N-terminal N(alpha)-acetyl-L-methionyl-L-phenylalanyl-[protein] + CoA + H(+). The enzyme catalyses N-terminal L-methionyl-L-tryptophyl-[protein] + acetyl-CoA = N-terminal N(alpha)-acetyl-L-methionyl-L-tryptophyl-[protein] + CoA + H(+). The catalysed reaction is N-terminal L-methionyl-L-tyrosyl-[protein] + acetyl-CoA = N-terminal N(alpha)-acetyl-L-methionyl-L-tyrosyl-[protein] + CoA + H(+). In terms of biological role, probably required for N-acetylation of some chloroplast precursor proteins and efficient accumulation of thylakoid multiprotein complexes. In yeast, can replace the NatC complex (composed of MAK3, MAK10 and MAK31) by acetylating N termini of endogenous proteins and the N-terminus Met of L-A virus Gag protein. However, the formation of a NatC complex is not required for this function. The sequence is that of N-alpha-acetyltransferase MAK3 (MAK3) from Arabidopsis thaliana (Mouse-ear cress).